The primary structure comprises 250 residues: tRNA (guanine-N(1)-)-methyltransferase (250 aa).

S-adenosyl-L-methionine-binding positions include glycine 115 and leucine 135–leucine 140.

Belongs to the RNA methyltransferase TrmD family. Homodimer.

Its subcellular location is the cytoplasm. It catalyses the reaction guanosine(37) in tRNA + S-adenosyl-L-methionine = N(1)-methylguanosine(37) in tRNA + S-adenosyl-L-homocysteine + H(+). Specifically methylates guanosine-37 in various tRNAs. In Legionella pneumophila (strain Paris), this protein is tRNA (guanine-N(1)-)-methyltransferase.